Here is a 721-residue protein sequence, read N- to C-terminus: Polyribonucleotide nucleotidyltransferase (721 aa).

Positions 486 and 492 each coordinate Mg(2+). The region spanning 553–612 (PKIVQLQIDIDKISLVIGSTGKTVKAITDEFEVKVQIEQNGKIILFGDDDFKMQKAKERI) is the KH domain. The S1 motif domain occupies 622 to 716 (GEIYEGIVKK…KFGKIDLEVV (95 aa)).

It belongs to the polyribonucleotide nucleotidyltransferase family. Requires Mg(2+) as cofactor.

The protein localises to the cytoplasm. The enzyme catalyses RNA(n+1) + phosphate = RNA(n) + a ribonucleoside 5'-diphosphate. In terms of biological role, involved in mRNA degradation. Catalyzes the phosphorolysis of single-stranded polyribonucleotides processively in the 3'- to 5'-direction. This chain is Polyribonucleotide nucleotidyltransferase, found in Borrelia garinii subsp. bavariensis (strain ATCC BAA-2496 / DSM 23469 / PBi) (Borreliella bavariensis).